Consider the following 315-residue polypeptide: Olfactory receptor 11A1 (315 aa).

The Extracellular portion of the chain corresponds to 1 to 27 (MEIVSTGNETITEFVLLGFYDIPELHF). Asparagine 8 carries an N-linked (GlcNAc...) asparagine glycan. A helical membrane pass occupies residues 28-48 (LFFIVFTAVYVFIIIGNMLII). The Cytoplasmic portion of the chain corresponds to 49 to 56 (VAVVSSQR). Residues 57–77 (LHKPMYIFLANLSFLDILYTS) form a helical membrane-spanning segment. The Extracellular segment spans residues 78–100 (AVMPKMLEGFLQEATISVAGCLL). Residues cysteine 98 and cysteine 190 are joined by a disulfide bond. The chain crosses the membrane as a helical span at residues 101–121 (QFFIFGSLATAECLLLAVMAY). Residues 122–140 (DRYLAICYPLHYPLLMGPR) lie on the Cytoplasmic side of the membrane. The chain crosses the membrane as a helical span at residues 141–161 (RYMGLVVTTWLSGFVVDGLVV). Over 162–198 (ALVAQLRFCGPNHIDQFYCDFMLFVGLACSDPRVAQV) the chain is Extracellular. A helical membrane pass occupies residues 199-218 (TTLILSVFCLTIPFGLILTS). The Cytoplasmic segment spans residues 219–238 (YARIVVAVLRVPAGASRRRA). Residues 239–259 (FSTCSSHLAVVTTFYGTLMIF) form a helical membrane-spanning segment. Residues 260–272 (YVAPSAVHSQLLS) lie on the Extracellular side of the membrane. The helical transmembrane segment at 273–293 (KVFSLLYTVVTPLFNPVIYTM) threads the bilayer. The Cytoplasmic portion of the chain corresponds to 294–315 (RNKEVHQALRKILCIKQTETLD).

It belongs to the G-protein coupled receptor 1 family.

The protein localises to the cell membrane. In terms of biological role, odorant receptor. This chain is Olfactory receptor 11A1 (OR11A1), found in Homo sapiens (Human).